A 379-amino-acid polypeptide reads, in one-letter code: 23S rRNA (uracil(747)-C(5))-methyltransferase RlmC (379 aa).

4 residues coordinate [4Fe-4S] cluster: Cys3, Cys11, Cys14, and Cys87. The S-adenosyl-L-methionine site is built by Gln212, Phe241, Glu262, and Asn309. The active-site Nucleophile is Cys336.

This sequence belongs to the class I-like SAM-binding methyltransferase superfamily. RNA M5U methyltransferase family. RlmC subfamily.

The catalysed reaction is uridine(747) in 23S rRNA + S-adenosyl-L-methionine = 5-methyluridine(747) in 23S rRNA + S-adenosyl-L-homocysteine + H(+). Functionally, catalyzes the formation of 5-methyl-uridine at position 747 (m5U747) in 23S rRNA. This Shewanella loihica (strain ATCC BAA-1088 / PV-4) protein is 23S rRNA (uracil(747)-C(5))-methyltransferase RlmC.